The primary structure comprises 366 residues: tRNA/tmRNA (uracil-C(5))-methyltransferase (366 aa).

Positions 190, 218, 223, 239, and 299 each coordinate S-adenosyl-L-methionine. Cys-324 functions as the Nucleophile in the catalytic mechanism. Glu-358 serves as the catalytic Proton acceptor.

This sequence belongs to the class I-like SAM-binding methyltransferase superfamily. RNA M5U methyltransferase family. TrmA subfamily.

The catalysed reaction is uridine(54) in tRNA + S-adenosyl-L-methionine = 5-methyluridine(54) in tRNA + S-adenosyl-L-homocysteine + H(+). The enzyme catalyses uridine(341) in tmRNA + S-adenosyl-L-methionine = 5-methyluridine(341) in tmRNA + S-adenosyl-L-homocysteine + H(+). Its function is as follows. Dual-specificity methyltransferase that catalyzes the formation of 5-methyluridine at position 54 (m5U54) in all tRNAs, and that of position 341 (m5U341) in tmRNA (transfer-mRNA). This Salmonella newport (strain SL254) protein is tRNA/tmRNA (uracil-C(5))-methyltransferase.